A 98-amino-acid chain; its full sequence is Citrate lyase acyl carrier protein 1 (98 aa).

S14 is modified (O-(phosphoribosyl dephospho-coenzyme A)serine).

This sequence belongs to the CitD family. In terms of assembly, oligomer with a subunit composition of (alpha,beta,gamma)6.

Its subcellular location is the cytoplasm. Functionally, covalent carrier of the coenzyme of citrate lyase. In Salmonella paratyphi A (strain ATCC 9150 / SARB42), this protein is Citrate lyase acyl carrier protein 1.